Reading from the N-terminus, the 374-residue chain is tRNA-specific 2-thiouridylase MnmA (374 aa).

Residues 17 to 24 (GMSGGVDS) and M43 each bind ATP. The tract at residues 103 to 105 (NPD) is interaction with target base in tRNA. The active-site Nucleophile is C108. C108 and C204 form a disulfide bridge. G132 contributes to the ATP binding site. Residues 154 to 156 (KDQ) are interaction with tRNA. The active-site Cysteine persulfide intermediate is C204. The interaction with tRNA stretch occupies residues 316–317 (RY).

This sequence belongs to the MnmA/TRMU family.

The protein resides in the cytoplasm. It carries out the reaction S-sulfanyl-L-cysteinyl-[protein] + uridine(34) in tRNA + AH2 + ATP = 2-thiouridine(34) in tRNA + L-cysteinyl-[protein] + A + AMP + diphosphate + H(+). Its function is as follows. Catalyzes the 2-thiolation of uridine at the wobble position (U34) of tRNA, leading to the formation of s(2)U34. The sequence is that of tRNA-specific 2-thiouridylase MnmA from Pseudomonas fluorescens (strain SBW25).